The following is a 460-amino-acid chain: Ammonium transporter Rh type C (460 aa).

Residues 1–9 (MVWNTNLRW) are Cytoplasmic-facing. The chain crosses the membrane as a helical span at residues 10–30 (RLPVTCLLLQVALVVLFGVFV). Topologically, residues 31 to 61 (RYDMDADPHWIDKKEAENSTSDMENEFYYRY) are extracellular. N-linked (GlcNAc...) asparagine glycosylation is present at N48. A helical membrane pass occupies residues 62–82 (PSFQDVHVMIFVGFGFLMTFL). Residues 83–90 (QRYGYSSV) are Cytoplasmic-facing. Residues 91 to 111 (GFNFLLAAFGIQWALLLQGWF) form a helical membrane-spanning segment. Over 112 to 125 (HSYYRGYIRVGVEN) the chain is Extracellular. Residues 126-145 (LINADFCVGSVCVAFGAVLG) traverse the membrane as a helical segment. At 146-151 (KVSPVQ) the chain is on the cytoplasmic side. A helical transmembrane segment spans residues 152 to 174 (LLIMTLFQVTLFSVNEFILLNLL). The Extracellular segment spans residues 175–179 (EVKDA). The chain crosses the membrane as a helical span at residues 180-200 (GGSMTIHTFGAYFGLTVTWIL). At 201–219 (YRPGLHQSKERQSSVYHSD) the chain is on the cytoplasmic side. A helical transmembrane segment spans residues 220 to 240 (LFAMIGTLFLWMYWPSFNSAV). Residues 241–251 (SNHGDAQHRAA) are Extracellular-facing. Residues 252–272 (INTYCSLAACVLTSVALSSAL) traverse the membrane as a helical segment. The Cytoplasmic portion of the chain corresponds to 273-285 (HKKGKLDMVHIQN). A helical membrane pass occupies residues 286 to 306 (ATLAGGVAVGTAAEMMLMPYG). A topological domain (extracellular) is located at residue S307. A helical transmembrane segment spans residues 308–328 (LIVGFICGIVSTLGFVYLTPF). Over 329 to 339 (LESRLRVQDTC) the chain is Cytoplasmic. Residues 340–360 (GIHNLHGIPGIIGAIVGAVTA) traverse the membrane as a helical segment. The Extracellular portion of the chain corresponds to 361–396 (SCANTDVYGVNGLTQAFGFDGFKTNRTPSMQGKFQA). The helical transmembrane segment at 397–417 (AGLFVSLAMALVGGIIVGIIL) threads the bilayer. Residues 418–460 (KLPFWGQPADENCFEDAIYWEMPEEPKSTVLHPEDSTLKPSEP) lie on the Cytoplasmic side of the membrane.

It belongs to the ammonium transporter (TC 2.A.49) family. Rh subfamily. As to quaternary structure, homotrimer. In terms of processing, N-glycosylated.

The protein localises to the apical cell membrane. The enzyme catalyses NH4(+)(in) = NH4(+)(out). It carries out the reaction methylamine(out) = methylamine(in). It catalyses the reaction CO2(out) = CO2(in). In terms of biological role, ammonium transporter involved in the maintenance of acid-base homeostasis. Transports ammonium and its related derivative methylammonium across the plasma membrane of epithelial cells likely contributing to renal transepithelial ammonia transport and ammonia metabolism. Postulated to primarily mediate an electroneutral bidirectional transport of NH3 ammonia species according to a mechanism that implies interaction of an NH4(+) ion with acidic residues of the pore entry followed by dissociation of NH4(+) into NH3 and H(+). As a result NH3 transits through the central pore and is protonated on the extracellular side reforming NH4(+). May act as a CO2 channel providing for renal acid secretion. This chain is Ammonium transporter Rh type C (RHCG), found in Canis lupus familiaris (Dog).